Reading from the N-terminus, the 240-residue chain is MANYDSNECVVCMEEKPLVVFEPCMHHNCCESCSGHVSNCPYCRADITGVYLEASVKVKLEPCEHIVKLIKITEKKCSTCDQDTTGMVIVDGKLTKTFKAENYRNAARLKNIIAMLIKAAKARNNRPGFFRKMKFGIPSVFTNYIHLDSCVICKKEIKEEVGKTYMHACCTATICKPCAKAILKAMVEKEITENLPFCPYCFTKTPIKYGLNAEGELLDPPSDSFSYYYVNEYMKMINNQ.

The segment at 9–44 (CVVCMEEKPLVVFEPCMHHNCCESCSGHVSNCPYCR) adopts an RING-type 1 zinc-finger fold. The RING-type 2; degenerate zinc finger occupies 150-202 (CVICKKEIKEEVGKTYMHACCTATICKPCAKAILKAMVEKEITENLPFCPYCF).

The protein is Putative RING finger protein ORF96 of Ostreid herpesvirus 1 (isolate France) (OsHV-1).